Here is a 460-residue protein sequence, read N- to C-terminus: Argininosuccinate lyase (460 aa).

This sequence belongs to the lyase 1 family. Argininosuccinate lyase subfamily.

The protein localises to the cytoplasm. The catalysed reaction is 2-(N(omega)-L-arginino)succinate = fumarate + L-arginine. Its pathway is amino-acid biosynthesis; L-arginine biosynthesis; L-arginine from L-ornithine and carbamoyl phosphate: step 3/3. The chain is Argininosuccinate lyase from Rhodopirellula baltica (strain DSM 10527 / NCIMB 13988 / SH1).